A 176-amino-acid polypeptide reads, in one-letter code: NAD(P)H-quinone oxidoreductase subunit 6, chloroplastic (176 aa).

The next 5 membrane-spanning stretches (helical) occupy residues I10–T30, P32–P52, A61–M81, I107–T127, and F152–A172.

Belongs to the complex I subunit 6 family. As to quaternary structure, NDH is composed of at least 16 different subunits, 5 of which are encoded in the nucleus.

The protein resides in the plastid. It is found in the chloroplast thylakoid membrane. The catalysed reaction is a plastoquinone + NADH + (n+1) H(+)(in) = a plastoquinol + NAD(+) + n H(+)(out). The enzyme catalyses a plastoquinone + NADPH + (n+1) H(+)(in) = a plastoquinol + NADP(+) + n H(+)(out). Its function is as follows. NDH shuttles electrons from NAD(P)H:plastoquinone, via FMN and iron-sulfur (Fe-S) centers, to quinones in the photosynthetic chain and possibly in a chloroplast respiratory chain. The immediate electron acceptor for the enzyme in this species is believed to be plastoquinone. Couples the redox reaction to proton translocation, and thus conserves the redox energy in a proton gradient. The protein is NAD(P)H-quinone oxidoreductase subunit 6, chloroplastic (ndhG) of Calycanthus floridus var. glaucus (Eastern sweetshrub).